A 379-amino-acid polypeptide reads, in one-letter code: DnaJ homolog subfamily B member 14 (379 aa).

The Cytoplasmic portion of the chain corresponds to 1–244; it reads MEGNRDEAEK…GHEREEERGD (244 aa). A disordered region spans residues 55–94; it reads STAGNSPHCRKPSGSGDQSKPNCTKDSTSGSGEGGKGYTK. Polar residues predominate over residues 69–84; that stretch reads SGDQSKPNCTKDSTSG. Positions 108–172 constitute a J domain; that stretch reads NYYEVLGVTK…EKRKQYDLTG (65 aa). The interval 219–241 is disordered; the sequence is SNGRAGYSQQHQHRHSGHEREEE. A helical transmembrane segment spans residues 245–265; sequence GGFSVFIQLMPIIVLILVSLL. Residues 266 to 379 are Lumenal-facing; that stretch reads SQLMVSNPPY…ERLTSLYKGG (114 aa).

It belongs to the DnaJ family. DNAJB12/DNAJB14 subfamily. In terms of assembly, interacts (via J domain) with HSPA8/Hsc70. Forms a multiprotein complex, at least composed of DNAJB12, DNAJB14, HSPA8/Hsc70 and SGTA; interaction with DNAJB14 and HSPA8/Hsc70 is direct.

Its subcellular location is the endoplasmic reticulum membrane. It localises to the nucleus membrane. Acts as a co-chaperone with HSPA8/Hsc70; required to promote protein folding and trafficking, prevent aggregation of client proteins, and promote unfolded proteins to endoplasmic reticulum-associated degradation (ERAD) pathway. Acts by determining HSPA8/Hsc70's ATPase and polypeptide-binding activities. Can also act independently of HSPA8/Hsc70: together with DNAJB12, acts as a chaperone that promotes maturation of potassium channels KCND2 and KCNH2 by stabilizing nascent channel subunits and assembling them into tetramers. While stabilization of nascent channel proteins is dependent on HSPA8/Hsc70, the process of oligomerization of channel subunits is independent of HSPA8/Hsc70. When overexpressed, forms membranous structures together with DNAJB12 and HSPA8/Hsc70 within the nucleus; the role of these structures, named DJANGOs, is still unclear. In terms of biological role, (Microbial infection) In case of infection by polyomavirus, involved in the virus endoplasmic reticulum membrane penetration and infection. The chain is DnaJ homolog subfamily B member 14 from Homo sapiens (Human).